A 194-amino-acid polypeptide reads, in one-letter code: GTP cyclohydrolase-2 (194 aa).

50 to 54 contributes to the GTP binding site; that stretch reads RIHSE. C55, C66, and C68 together coordinate Zn(2+). Residues 94-96 and T116 contribute to the GTP site; that span reads EGR. The active-site Proton acceptor is the D128. R130 (nucleophile) is an active-site residue. T151 and K156 together coordinate GTP.

Belongs to the GTP cyclohydrolase II family. It depends on Zn(2+) as a cofactor.

The catalysed reaction is GTP + 4 H2O = 2,5-diamino-6-hydroxy-4-(5-phosphoribosylamino)-pyrimidine + formate + 2 phosphate + 3 H(+). It participates in cofactor biosynthesis; riboflavin biosynthesis; 5-amino-6-(D-ribitylamino)uracil from GTP: step 1/4. Catalyzes the conversion of GTP to 2,5-diamino-6-ribosylamino-4(3H)-pyrimidinone 5'-phosphate (DARP), formate and pyrophosphate. The protein is GTP cyclohydrolase-2 of Helicobacter hepaticus (strain ATCC 51449 / 3B1).